The following is a 228-amino-acid chain: HTH-type transcriptional activator FasR (228 aa).

The interval 1–39 is disordered; the sequence is MSDLAKTAQRRALRSSGSARPDEDVPAPNRRGNRLPRDE. An HTH tetR-type domain is found at 38 to 98; that stretch reads DERRGQLLVV…AVLHRHVENL (61 aa). A DNA-binding region (H-T-H motif) is located at residues 61–80; the sequence is GMDEIADRAGVSKPVLYQHF.

Homodimer.

FasR:DNA binding is regulated by long-chain acyl-CoAs (C14- to C26-CoA), which act as effector molecules that modulate the affinity of FasR for its DNA binding sequences and therefore modulate the expression of the essential fas-acpS operon. FasR activity is not affected by mycolic acid biosynthesis intermediates. Functionally, transcriptional activator that plays a central role in sensing mycobacterial long-chain fatty acids and regulating lipid biosynthesis. Activates the expression of the genes encoding the fatty acid synthase (fas) and the 4-phosphopantetheinyl transferase (acpS), whose products are involved in the fatty acid and mycolic acid biosynthesis. Specifically binds to three conserved operator sequences present in the fas-acpS promoter region. Not essential for M.tuberculosis viability, although it is required for the optimal growth in vitro and for virulence in macrophages and in a mouse model of infection. In Mycobacterium tuberculosis (strain ATCC 25618 / H37Rv), this protein is HTH-type transcriptional activator FasR.